Consider the following 517-residue polypeptide: Protein disulfide-isomerase A5 (517 aa).

An N-terminal signal peptide occupies residues 1-21; the sequence is MARAWGLLLAIGVILPTWLSS. Intrachain disulfides connect C83-C92, C180-C183, C303-C306, and C424-C427. Thioredoxin domains lie at 132–259, 268–382, and 376–504; these read FLKD…NPQP, PWAD…NPEA, and WMQN…TLRE. The Prevents secretion from ER signature appears at 514–517; sequence REDL.

Belongs to the protein disulfide isomerase family.

Its subcellular location is the endoplasmic reticulum lumen. It carries out the reaction Catalyzes the rearrangement of -S-S- bonds in proteins.. This is Protein disulfide-isomerase A5 (Pdia5) from Rattus norvegicus (Rat).